A 277-amino-acid polypeptide reads, in one-letter code: MTLALNPIAFSIGDIHVRWYGIIIACGILLATFMSIREGQRRQIMSDDFIDLLLWGVPIGFIGARIYYVIFEWGYFSQHPDEIIAIWNGGIAIYGGLIAGAIVLLVFCYRRFLPPFLVLDIVAPGVMAAQVLGRWGNFMNQEAHGAKCSLQYLQNLHLPQFIIDQMYINGSYYKPTFLYESFFNLIGLIIILSLRHKKHLFKQGEVFMLYLAWYSVVRFFVEGMRTDSLYIFGVIRVSQALSLLLLIAVVILFVYRRVKVKPKWYLEGSGLKYPYER.

A run of 4 helical transmembrane segments spans residues 15–35, 50–70, 89–109, and 112–132; these read IHVR…TFMS, IDLL…YYVI, GGIA…VFCY, and FLPP…AQVL. Position 134 (R134) interacts with a 1,2-diacyl-sn-glycero-3-phospho-(1'-sn-glycerol). The next 3 helical transmembrane spans lie at 174–194, 204–224, and 234–254; these read KPTF…ILSL, GEVF…VEGM, and VIRV…ILFV.

It belongs to the Lgt family.

Its subcellular location is the cell membrane. It catalyses the reaction L-cysteinyl-[prolipoprotein] + a 1,2-diacyl-sn-glycero-3-phospho-(1'-sn-glycerol) = an S-1,2-diacyl-sn-glyceryl-L-cysteinyl-[prolipoprotein] + sn-glycerol 1-phosphate + H(+). Its pathway is protein modification; lipoprotein biosynthesis (diacylglyceryl transfer). Functionally, catalyzes the transfer of the diacylglyceryl group from phosphatidylglycerol to the sulfhydryl group of the N-terminal cysteine of a prolipoprotein, the first step in the formation of mature lipoproteins. In Lactobacillus delbrueckii subsp. bulgaricus (strain ATCC 11842 / DSM 20081 / BCRC 10696 / JCM 1002 / NBRC 13953 / NCIMB 11778 / NCTC 12712 / WDCM 00102 / Lb 14), this protein is Phosphatidylglycerol--prolipoprotein diacylglyceryl transferase.